We begin with the raw amino-acid sequence, 137 residues long: DNA-directed RNA polymerase subunit omega (137 aa).

The tract at residues 78–137 (DEPEPEAVPLLSSSPAAAAVAPQAASGDDNDIQFDRMSEEDLLRGLENLAPPTETEDEGD) is disordered. The span at 84-103 (AVPLLSSSPAAAAVAPQAAS) shows a compositional bias: low complexity. Over residues 110 to 121 (QFDRMSEEDLLR) the composition is skewed to basic and acidic residues.

This sequence belongs to the RNA polymerase subunit omega family. As to quaternary structure, the RNAP catalytic core consists of 2 alpha, 1 beta, 1 beta' and 1 omega subunit. When a sigma factor is associated with the core the holoenzyme is formed, which can initiate transcription.

It catalyses the reaction RNA(n) + a ribonucleoside 5'-triphosphate = RNA(n+1) + diphosphate. Promotes RNA polymerase assembly. Latches the N- and C-terminal regions of the beta' subunit thereby facilitating its interaction with the beta and alpha subunits. In Methylobacterium sp. (strain 4-46), this protein is DNA-directed RNA polymerase subunit omega.